A 102-amino-acid polypeptide reads, in one-letter code: Monothiol glutaredoxin-S5 (102 aa).

Positions 1–101 constitute a Glutaredoxin domain; the sequence is MENLQKMISE…PMLKRAGALW (101 aa). Cysteine 21 contacts [2Fe-2S] cluster. The short motif at 99–102 is the Responsive for interaction with TGA factors element; the sequence is ALWL.

This sequence belongs to the glutaredoxin family. CC-type subfamily.

It localises to the cytoplasm. The protein localises to the nucleus. Its function is as follows. May only reduce GSH-thiol disulfides, but not protein disulfides. This Arabidopsis thaliana (Mouse-ear cress) protein is Monothiol glutaredoxin-S5 (GRXS5).